The primary structure comprises 206 residues: Putative 3-methyladenine DNA glycosylase (206 aa).

It belongs to the DNA glycosylase MPG family.

This chain is Putative 3-methyladenine DNA glycosylase, found in Staphylococcus carnosus (strain TM300).